The sequence spans 271 residues: Pyrroline-5-carboxylate reductase (271 aa).

It belongs to the pyrroline-5-carboxylate reductase family.

The protein resides in the cytoplasm. The enzyme catalyses L-proline + NADP(+) = (S)-1-pyrroline-5-carboxylate + NADPH + 2 H(+). It carries out the reaction L-proline + NAD(+) = (S)-1-pyrroline-5-carboxylate + NADH + 2 H(+). The protein operates within amino-acid biosynthesis; L-proline biosynthesis; L-proline from L-glutamate 5-semialdehyde: step 1/1. In terms of biological role, catalyzes the reduction of 1-pyrroline-5-carboxylate (PCA) to L-proline. The protein is Pyrroline-5-carboxylate reductase of Haemophilus influenzae (strain ATCC 51907 / DSM 11121 / KW20 / Rd).